We begin with the raw amino-acid sequence, 168 residues long: MSSVVFASARLNATNQSYLPVPITLATAYEMQHGDSLRLKTSHGLKIKIRIKEAASTLYMTTGWKEFAEATGLETGETILFRMSSRSKARVMLLNRQCLIRCPVKTPSTTSSDKNRSLSPSDQLTRASTSAHPSTSKSIPPLRNGTGSTKRSIADTSFCHQLKLTAEN.

The TF-B3 DNA-binding region spans 4 to 97 (VVFASARLNA…KARVMLLNRQ (94 aa)). The segment at 105–151 (KTPSTTSSDKNRSLSPSDQLTRASTSAHPSTSKSIPPLRNGTGSTKR) is disordered. A compositionally biased stretch (polar residues) spans 106-138 (TPSTTSSDKNRSLSPSDQLTRASTSAHPSTSKS).

The protein resides in the nucleus. This is Putative B3 domain-containing protein Os10g0158600 from Oryza sativa subsp. japonica (Rice).